A 159-amino-acid polypeptide reads, in one-letter code: Antitoxin Xre (159 aa).

This sequence belongs to the MbcA/ParS/Xre antitoxin family. Homodimer. Forms a complex with cognate toxin Res; the 2 toxin molecules dimerize and each contacts an Xre homodimer. Most Res-Xre contacts are between the antitoxin molecule closest to the toxin.

Probable antitoxin component of a type II toxin-antitoxin (TA) system. In vivo probably neutralizes the toxic effect of cognate toxin Res. The polypeptide is Antitoxin Xre (Pseudomonas putida (strain ATCC 47054 / DSM 6125 / CFBP 8728 / NCIMB 11950 / KT2440)).